Here is a 485-residue protein sequence, read N- to C-terminus: Argininosuccinate lyase (485 aa).

It belongs to the lyase 1 family. Argininosuccinate lyase subfamily.

Its subcellular location is the cytoplasm. It carries out the reaction 2-(N(omega)-L-arginino)succinate = fumarate + L-arginine. The protein operates within amino-acid biosynthesis; L-arginine biosynthesis; L-arginine from L-ornithine and carbamoyl phosphate: step 3/3. This chain is Argininosuccinate lyase, found in Halobacterium salinarum (strain ATCC 29341 / DSM 671 / R1).